The following is an 867-amino-acid chain: MVSRSCANFLDLASWDLLDFPQTQRALPRVMTVPGIISELDGGYSDGSSDVNSSNSSRERKIIVANMLPLQAKRDTETGQWCFSWDEDSLLLQLRDGFSSDTEFVYIGSLNADIGISEQEEVSHKLLLDFNCVPTFLPKEMQEKFYLGFCKHHLWPLFHYMLPMFPDHGDRFDRRLWQAYVSANKIFSDRVMEVINPEEDYVWIHDYHLMVLPTFLRKRFNRIKLGFFLHSPFPSSEIYRTLPVRDDLLRGLLNCDLIGFHTFDYARHFLSCCSRMLGLDYESKRGHIGLDYFGRTVFIKILPVGIHMGRLESVLNLPSTAAKMKEIQEQFKGKKLILGVDDMDIFKGISLKLIAMERLFETYWHMRGKLVLIQIVNPARATGKDVEEAKKETYSTAKRINERYGSAGYQPVILIDRLVPRYEKTAYYAMADCCLVNAVRDGMNLVPYKYIICRQGTPGMDKAMGISHDSARTSMLVVSEFIGCSPSLSGAIRVNPWDVDAVAEAVNLALTMGETEKRLRHEKHYHYVSTHDVGYWAKSFMQDLERACREHYNKRCWGIGFGLSFRVLSLSPSFRKLSIDHIVSTYRNTQRRAIFLDYDGTLVPESSIIKTPNAEVLSVLKSLCGDPKNTVFVVSGRGWESLSDWLSPCENLGIAAEHGYFIRWSSKKEWETCYSSAEAEWKTMVEPVMRSYMDATDGSTIEYKESALVWHHQDADPDFGACQAKELLDHLESVLANEPVVVKRGQHIVEVKPQGVSKGLAVEKVIHQMVEDGNPPDMVMCIGDDRSDEDMFESILSTVTNPDLPMPPEIFACTVGRKPSKAKYFLDDVSDVLKLLGGLAAATSSSKPEYQQQSSSLHTQVAFESII.

S5 carries the post-translational modification Phosphoserine. Phosphothreonine is present on T32. The glycosyltransferase stretch occupies residues 59 to 546 (ERKIIVANML…AKSFMQDLER (488 aa)).

This sequence in the N-terminal section; belongs to the glycosyltransferase 20 family. The protein in the C-terminal section; belongs to the trehalose phosphatase family.

The catalysed reaction is D-glucose 6-phosphate + UDP-alpha-D-glucose = alpha,alpha-trehalose 6-phosphate + UDP + H(+). This Arabidopsis thaliana (Mouse-ear cress) protein is Probable alpha,alpha-trehalose-phosphate synthase [UDP-forming] 9 (TPS9).